The following is a 77-amino-acid chain: Sec-independent protein translocase protein TatA (77 aa).

The chain crosses the membrane as a helical span at residues Met1–Gly21. The segment covering Met43–Asp60 has biased composition (basic and acidic residues). A disordered region spans residues Met43–Val77.

It belongs to the TatA/E family. As to quaternary structure, the Tat system comprises two distinct complexes: a TatABC complex, containing multiple copies of TatA, TatB and TatC subunits, and a separate TatA complex, containing only TatA subunits. Substrates initially bind to the TatABC complex, which probably triggers association of the separate TatA complex to form the active translocon.

The protein localises to the cell inner membrane. Functionally, part of the twin-arginine translocation (Tat) system that transports large folded proteins containing a characteristic twin-arginine motif in their signal peptide across membranes. TatA could form the protein-conducting channel of the Tat system. This Bradyrhizobium sp. (strain BTAi1 / ATCC BAA-1182) protein is Sec-independent protein translocase protein TatA.